The chain runs to 890 residues: MNYVGQLAGQVFVTVKELYKGLNPATLSGCIDIIVIRQPNGNLQCSPFHVRFGKMGVLRSREKVVDIEINGESVDLHMKLGDNGEAFFVQETDNDQEVIPMHLATSPILSEGASRMECQLKRGSVDRMRGLDPSTPAQVIAPSETPSSSSVVKKRRKRRRKSQLDSLKRDDNMNTSEDEDMFPIEMSSDEAMELLESSRTLPNDIPPFQDDIPEENLSLAVIYPQSASYPNSDREWSPTPSPSGSRPSTPKSDSELVSKSTERTGQKNPEMLWLWGELPQAAKSSSPHKMKESSPLSSRKICDKSHFQAIHSESSDTFSDQSPTLVGGALLDQNKPQTEMQFVNEEDLETLGAAAPLLPMIEELKPPSASVVQTANKTDSPSRKRDKRSRHLGADGVYLDDLTDMDPEVAALYFPKNGDPSGLAKHASDNGARSANQSPQSVGSSGVDSGVESTSDGLRDLPSIAISLCGGLSDHREITKDAFLEQAVSYQQFVDNPAIIDDPNLVVKIGSKYYNWTTAAPLLLAMQAFQKPLPKATVESIMRDKMPKKGGRWWFSWRGRNTTIKEESKPEQCLAGKAHSTGEQPPQLSLATRVKHESSSSDEERAAAKPSNAGHLPLLPNVSYKKTLRLTSEQLKSLKLKNGPNDVVFSVTTQYQGTCRCEGTIYLWNWDDKVIISDIDGTITRSDTLGHILPTLGKDWTHQGIAKLYHKVSQNGYKFLYCSARAIGMADMTRGYLHWVNERGTVLPQGPLLLSPSSLFSALHREVIEKKPEKFKVQCLTDIKNLFFPNTEPFYAAFGNRPADVYSYKQVGVSLNRIFTVNPKGELVQEHAKTNISSYVRLCEVVDHVFPLLKRSHSSDFPCSDTFSNFTFWREPLPPFENQDIHSASA.

The segment at 1-108 is N-LIP; the sequence is MNYVGQLAGQ…IPMHLATSPI (108 aa). Phosphoserine is present on residues serine 106 and serine 150. Disordered regions lie at residues 125 to 183, 228 to 300, 365 to 392, and 421 to 456; these read VDRM…DMFP, SYPN…SSRK, KPPSASVVQTANKTDSPSRKRDKRSRHL, and SGLAKHASDNGARSANQSPQSVGSSGVDSGVESTSD. Positions 152–161 are enriched in basic residues; it reads VKKRRKRRRK. The short motif at 153-158 is the Nuclear localization signal element; sequence KKRRKR. Basic and acidic residues-rich tracts occupy residues 162 to 172 and 252 to 265; these read SQLDSLKRDDN and SDSELVSKSTERTG. Phosphoserine is present on residues serine 252, serine 254, and serine 260. Threonine 264 is modified (phosphothreonine). Serine 294 is modified (phosphoserine). Lysine 425 carries the N6-acetyllysine modification. Residues 431-440 are compositionally biased toward polar residues; the sequence is GARSANQSPQ. Phosphoserine occurs at positions 434, 438, and 449. The segment covering 441 to 456 has biased composition (low complexity); it reads SVGSSGVDSGVESTSD. A Glycyl lysine isopeptide (Lys-Gly) (interchain with G-Cter in SUMO) cross-link involves residue lysine 565. The segment at 566–616 is disordered; it reads EESKPEQCLAGKAHSTGEQPPQLSLATRVKHESSSSDEERAAAKPSNAGHL. Over residues 581-590 the composition is skewed to polar residues; sequence TGEQPPQLSL. Residues 594–607 show a composition bias toward basic and acidic residues; it reads VKHESSSSDEERAA. N6-acetyllysine is present on lysine 595. A Glycyl lysine isopeptide (Lys-Gly) (interchain with G-Cter in SUMO) cross-link involves residue lysine 595. Serine 600 and serine 601 each carry phosphoserine. The interval 624 to 830 is C-LIP; it reads YKKTLRLTSE…VNPKGELVQE (207 aa). The DXDXT motif signature appears at 678 to 682; it reads DIDGT. Residues 689–693 carry the LXXIL motif motif; the sequence is LGHIL. A phosphoserine mark is found at serine 887 and serine 889.

This sequence belongs to the lipin family. In terms of assembly, interacts (via LXXIL motif) with PPARA. Interacts with PPARGC1A. Interaction with PPARA and PPARGC1A leads to the formation of a complex that modulates gene transcription. Interacts with MEF2C. The cofactor is Mg(2+). Mn(2+) is required as a cofactor. Post-translationally, phosphorylated at multiple sites by mTOR in response to insulin, leading to its inactivation. Phosphorylation does not affect the catalytic activity but regulates the localization. Phosphorylation is decreased by epinephrine. Dephosphorylated by the CTDNEP1-CNEP1R1 complex. Dephosphorylation following mTOR inhibition promotes its activity. Acetylation at Lys-425 and Lys-595 by KAT5 in response to fatty acids promotes translocation to the endoplasmic reticulum and synthesis of diacylglycerol. In terms of processing, sumoylated. In terms of tissue distribution, specifically expressed in skeletal muscle. Also abundant in adipose tissue. Lower levels in some portions of the digestive tract.

It is found in the cytoplasm. The protein localises to the cytosol. It localises to the endoplasmic reticulum membrane. The protein resides in the nucleus membrane. It catalyses the reaction a 1,2-diacyl-sn-glycero-3-phosphate + H2O = a 1,2-diacyl-sn-glycerol + phosphate. The enzyme catalyses 1-octadecanoyl-2-(4Z,7Z,10Z,13Z,16Z,19Z-docosahexaenoyl)-sn-glycero-3-phosphate + H2O = 1-octadecanoyl-2-(4Z,7Z,10Z,13Z,16Z,19Z-docosahexaenoyl)-sn-glycerol + phosphate. The catalysed reaction is 1-octadecanoyl-2-(5Z,8Z,11Z,14Z-eicosatetraenoyl)-sn-glycero-3-phosphate + H2O = 1-octadecanoyl-2-(5Z,8Z,11Z,14Z-eicosatetraenoyl)-sn-glycerol + phosphate. It carries out the reaction 1-octadecanoyl-2-(9Z,12Z-octadecadienoyl)-sn-glycero-3-phosphate + H2O = 1-octadecanoyl-2-(9Z,12Z)-octadecadienoyl-sn-glycerol + phosphate. It catalyses the reaction 1-octadecanoyl-2-(9Z-octadecenoyl)-sn-glycero-3-phosphate + H2O = 1-octadecanoyl-2-(9Z-octadecenoyl)-sn-glycerol + phosphate. The enzyme catalyses 1-hexadecanoyl-2-(4Z,7Z,10Z,13Z,16Z,19Z-docosahexaenoyl)-sn-glycero-3-phosphate + H2O = 1-hexadecanoyl-2-(4Z,7Z,10Z,13Z,16Z,19Z-docosahexaenoyl)-sn-glycerol + phosphate. The catalysed reaction is 1,2-dioctadecanoyl-sn-glycero-3-phosphate + H2O = 1,2-dioctadecanoyl-sn-glycerol + phosphate. It carries out the reaction 1-hexadecanoyl-2-(5Z,8Z,11Z,14Z-eicosatetraenoyl)-sn-glycero-3-phosphate + H2O = 1-hexadecanoyl-2-(5Z,8Z,11Z,14Z-eicosatetraenoyl)-sn-glycerol + phosphate. It catalyses the reaction 1-hexadecanoyl-2-(9Z,12Z-octadecadienoyl)-sn-glycero-3-phosphate + H2O = 1-hexadecanoyl-2-(9Z,12Z-octadecadienoyl)-sn-glycerol + phosphate. The enzyme catalyses 1-hexadecanoyl-2-(9Z-octadecenoyl)-sn-glycero-3-phosphate + H2O = 1-hexadecanoyl-2-(9Z-octadecenoyl)-sn-glycerol + phosphate. The catalysed reaction is 1,2-di-(4Z,7Z,10Z,13Z,16Z,19Z-docosahexaenoyl)-sn-glycero-3-phosphate + H2O = 1,2-di-(4Z,7Z,10Z,13Z,16Z,19Z-docosahexaenoyl)-sn-glycerol + phosphate. It carries out the reaction 1,2-di-(5Z,8Z,11Z,14Z)-eicosatetraenoyl-sn-glycero-3-phosphate + H2O = 1,2-di-(5Z,8Z,11Z,14Z)-eicosatetraenoyl-sn-glycerol + phosphate. It catalyses the reaction 1,2-di-(9Z,12Z-octadecadienoyl)-sn-glycero-3-phosphate + H2O = 1,2-di-(9Z,12Z-octadecadienoyl)-sn-glycerol + phosphate. The enzyme catalyses 1,2-di-(9Z-octadecenoyl)-sn-glycero-3-phosphate + H2O = 1,2-di-(9Z-octadecenoyl)-sn-glycerol + phosphate. The catalysed reaction is 1,2-dihexadecanoyl-sn-glycero-3-phosphate + H2O = 1,2-dihexadecanoyl-sn-glycerol + phosphate. Its activity is regulated as follows. Potently inhibited by sphingolipids, in particular, the sphingoid bases sphinganine and sphingosine and ceramide-1-phosphate. Inhibited by concentrations of Mg(2+) and Mn(2+) above their optimums and by Ca(2+), Zn(2+), N-ethylmaleimide and propranolol. With respect to regulation, sertraline and propanolol inhibit activity in dose-dependent manners with IC(50) values of 103 uM and 226 uM, respectively. Sertraline and propanolol inhibit activity in dose-dependent manners with IC(50) values of 108 uM and 271 uM, respectively. Its activity is regulated as follows. Sertraline and propanolol inhibit activity in dose-dependent manners with IC(50) values of 143 uM and 227 uM, respectively. Acts as a magnesium-dependent phosphatidate phosphatase enzyme which catalyzes the conversion of phosphatidic acid to diacylglycerol during triglyceride, phosphatidylcholine and phosphatidylethanolamine biosynthesis and therefore controls the metabolism of fatty acids at different levels. Is involved in adipocyte differentiation. Recruited at the mitochondrion outer membrane and is involved in mitochondrial fission by converting phosphatidic acid to diacylglycerol. Acts also as nuclear transcriptional coactivator for PPARGC1A/PPARA regulatory pathway to modulate lipid metabolism gene expression. This chain is Phosphatidate phosphatase LPIN1, found in Homo sapiens (Human).